A 600-amino-acid polypeptide reads, in one-letter code: MHRAAAVDTTPKIVFYYKCLLNKNWNEPINNIFWGEFFLLQPRLEVLSQLLRECPKQELTVNGPKFHSMYLYISEILKSKAESLRIRNSLATLQTFLAELSVRKPTDVNFTIFLLLGNIDSIDIQFSAFIKNLCQLVKDSEDVQSVEISLRFVLHFVSFLYNSSFISHIYGNYDVFSTLYTVILKRKFGFETAVYAIGLLSACDKFETVNTFRLGLSKIVDEEFFSSVLSSSAQQLISLRDFYVSIKPDNPLTGSFFNLFSLRSSSNNPDSDQESQFSRLPDERATMFFTIYELCCCNKLFLKKLVEGGEKNGEAPLEALLSLLSYINTHQRQSERSHHFSILSLILFHIIIDDRSLLYRLTDKKFKISVRVCSQRYPYPPNATKPATPLGYMLDICCIGIQHNMKLNLSATMYFLYFSFVYRAMTSLVQDGIRMEYHWLELWRVLFSFLDFVSVLINTSPTEDVTRLLELILDVLAYIISNGDALVIRSDELVDLFYKLLHSSKNFSSFSSKIPDERLGALNYLLEVTEYLTSKTVDLPRSTADEVESVIKLELESIPVAKQNAFGGVPPFKESQYRLFHKRASRGMADLLRRKSEAAN.

The next 2 helical transmembrane spans lie at 409–429 and 437–457; these read LSAT…TSLV and YHWL…SVLI.

This sequence belongs to the UPF0588 family.

The protein resides in the membrane. The protein is UPF0588 membrane protein C20F10.02c of Schizosaccharomyces pombe (strain 972 / ATCC 24843) (Fission yeast).